We begin with the raw amino-acid sequence, 372 residues long: Phospho-N-acetylmuramoyl-pentapeptide-transferase (372 aa).

The next 10 membrane-spanning stretches (helical) occupy residues 25–45 (RSLLSILTSLAIGLMLGPVMI), 73–93 (TMGGVLILMSIGISTLLWADL), 98–118 (VWIVLGVMVVFGAVGWADDWI), 134–154 (FFWTSVASLGAGISLYVIAQN), 176–196 (SIPLSAVPLGIAFIIFTYLVI), 211–231 (GLAIMPIVMVAAGLGVFAYLA), 251–271 (LVVICSAMVGAGLAFLWYNAH), 275–295 (IFMGDVGALALGAMLGTIAVM), 300–320 (IVFAIMGGVFVMEAISVFLQI), and 349–369 (QVVTRFWIITIMLVVLGLMTL).

The protein belongs to the glycosyltransferase 4 family. MraY subfamily. Mg(2+) serves as cofactor.

Its subcellular location is the cell inner membrane. The catalysed reaction is UDP-N-acetyl-alpha-D-muramoyl-L-alanyl-gamma-D-glutamyl-meso-2,6-diaminopimeloyl-D-alanyl-D-alanine + di-trans,octa-cis-undecaprenyl phosphate = di-trans,octa-cis-undecaprenyl diphospho-N-acetyl-alpha-D-muramoyl-L-alanyl-D-glutamyl-meso-2,6-diaminopimeloyl-D-alanyl-D-alanine + UMP. It participates in cell wall biogenesis; peptidoglycan biosynthesis. In terms of biological role, catalyzes the initial step of the lipid cycle reactions in the biosynthesis of the cell wall peptidoglycan: transfers peptidoglycan precursor phospho-MurNAc-pentapeptide from UDP-MurNAc-pentapeptide onto the lipid carrier undecaprenyl phosphate, yielding undecaprenyl-pyrophosphoryl-MurNAc-pentapeptide, known as lipid I. In Acinetobacter baylyi (strain ATCC 33305 / BD413 / ADP1), this protein is Phospho-N-acetylmuramoyl-pentapeptide-transferase.